The chain runs to 353 residues: MKSMPVAPIADLRVAQLIDANLDRAREGLRVVEDWCRFGLDREDLVVTLKDWRQRLGRHHHDSYKQARSTATDQGIGLSHPAQQERHEPWHVVAANCARVQEALRVLEEFARQPDPQLAASAAAIRYGLYDLEVTVLQANAGKKRRQQLQACHLCLITTSQSDLANNDLFRTVSAALVAGIDMVQYRNKEASDLQRLTQAKELASLCRKHGALFIVNDRIDLALAVDADGVHLGQDDLPTDVARGLIGSERLLGRSTQFLAQLQKAEAEGCDYLGVGPVNSTATKPERQPIGLAYVKEASKATQLPWFAIGGINISNLEAVRQAGAKRIAVIGAIMNSKDPAATSLQLLEALR.

Positions 1–128 are unknown; that stretch reads MKSMPVAPIA…AASAAAIRYG (128 aa). Positions 129-353 are thiamine-phosphate synthase; the sequence is LYDLEVTVLQ…TSLQLLEALR (225 aa). 4-amino-2-methyl-5-(diphosphooxymethyl)pyrimidine is bound by residues 185 to 189 and Asn217; that span reads QYRNK. The Mg(2+) site is built by Asp218 and Asp237. 4-amino-2-methyl-5-(diphosphooxymethyl)pyrimidine is bound at residue Ser256. 282–284 lines the 2-[(2R,5Z)-2-carboxy-4-methylthiazol-5(2H)-ylidene]ethyl phosphate pocket; it reads TAT. Lys285 is a binding site for 4-amino-2-methyl-5-(diphosphooxymethyl)pyrimidine. Gly312 provides a ligand contact to 2-[(2R,5Z)-2-carboxy-4-methylthiazol-5(2H)-ylidene]ethyl phosphate.

This sequence belongs to the thiamine-phosphate synthase family. It depends on Mg(2+) as a cofactor.

The catalysed reaction is 2-[(2R,5Z)-2-carboxy-4-methylthiazol-5(2H)-ylidene]ethyl phosphate + 4-amino-2-methyl-5-(diphosphooxymethyl)pyrimidine + 2 H(+) = thiamine phosphate + CO2 + diphosphate. It carries out the reaction 2-(2-carboxy-4-methylthiazol-5-yl)ethyl phosphate + 4-amino-2-methyl-5-(diphosphooxymethyl)pyrimidine + 2 H(+) = thiamine phosphate + CO2 + diphosphate. It catalyses the reaction 4-methyl-5-(2-phosphooxyethyl)-thiazole + 4-amino-2-methyl-5-(diphosphooxymethyl)pyrimidine + H(+) = thiamine phosphate + diphosphate. The protein operates within cofactor biosynthesis; thiamine diphosphate biosynthesis; thiamine phosphate from 4-amino-2-methyl-5-diphosphomethylpyrimidine and 4-methyl-5-(2-phosphoethyl)-thiazole: step 1/1. Functionally, condenses 4-methyl-5-(beta-hydroxyethyl)thiazole monophosphate (THZ-P) and 2-methyl-4-amino-5-hydroxymethyl pyrimidine pyrophosphate (HMP-PP) to form thiamine monophosphate (TMP). This Prochlorococcus marinus (strain MIT 9303) protein is Thiamine-phosphate synthase.